A 325-amino-acid chain; its full sequence is Ribosomal RNA small subunit methyltransferase H (325 aa).

Residues 33–35, D52, L87, D101, and Q108 contribute to the S-adenosyl-L-methionine site; that span reads GGH. The interval 285–325 is disordered; it reads AEPAGEVEKADNPRAASVRLRAAERTAPNPDRTQPTIGGAS. Residues 315 to 325 are compositionally biased toward polar residues; the sequence is DRTQPTIGGAS.

The protein belongs to the methyltransferase superfamily. RsmH family.

It localises to the cytoplasm. It carries out the reaction cytidine(1402) in 16S rRNA + S-adenosyl-L-methionine = N(4)-methylcytidine(1402) in 16S rRNA + S-adenosyl-L-homocysteine + H(+). Functionally, specifically methylates the N4 position of cytidine in position 1402 (C1402) of 16S rRNA. The polypeptide is Ribosomal RNA small subunit methyltransferase H (Frankia alni (strain DSM 45986 / CECT 9034 / ACN14a)).